A 557-amino-acid chain; its full sequence is Probable WRKY transcription factor 20 (557 aa).

The segment covering 1 to 12 (MNPQANDRKEFQ) has biased composition (basic and acidic residues). Disordered stretches follow at residues 1–36 (MNPQ…GGGA) and 76–215 (KPEP…DGYN). Polar residues predominate over residues 95-114 (SASSSSYTGRGFHQNTFTEQ). Residues 151 to 169 (SSHSPSSISDAAGSSSELS) show a composition bias toward low complexity. The span at 193–207 (SIQTSQNDSRGSTPS) shows a compositional bias: polar residues. The segment at residues 205 to 269 (TPSILADDGY…YKGTHDHPKP (65 aa)) is a DNA-binding region (WRKY 1). Zn(2+) contacts are provided by Cys-236, Cys-241, His-264, and His-266. Positions 257-348 (DIIYKGTHDH…PDDDDPFSKR (92 aa)) are disordered. A compositionally biased stretch (basic and acidic residues) spans 282–299 (QEERLDKYPSSTGRDEKG). Over residues 303–314 (YNLSNPNEQTGN) the composition is skewed to polar residues. Positions 321 to 332 (SASDDGGEAAAS) are enriched in low complexity. The WRKY 2 DNA-binding region spans 375–440 (SEVDILDDGY…YEGKHDHDVP (66 aa)). Residues Cys-406, Cys-411, His-435, and His-437 each contribute to the Zn(2+) site. 2 disordered regions span residues 433-486 (GKHD…QHQN) and 520-557 (NQYG…QSGP). Residues 520–536 (NQYGQRETKNETQNGDI) are compositionally biased toward polar residues.

The protein belongs to the WRKY group I family.

The protein localises to the nucleus. In terms of biological role, transcription factor. Interacts specifically with the W box (5'-(T)TGAC[CT]-3'), a frequently occurring elicitor-responsive cis-acting element. The polypeptide is Probable WRKY transcription factor 20 (WRKY20) (Arabidopsis thaliana (Mouse-ear cress)).